Here is a 543-residue protein sequence, read N- to C-terminus: Chaperonin GroEL 2 (543 aa).

Residues 29–32 (TLGP), 86–90 (DGTTT), Gly413, 478–480 (NAA), and Asp494 each bind ATP.

The protein belongs to the chaperonin (HSP60) family. In terms of assembly, forms a cylinder of 14 subunits composed of two heptameric rings stacked back-to-back. Interacts with the co-chaperonin GroES.

Its subcellular location is the cytoplasm. The enzyme catalyses ATP + H2O + a folded polypeptide = ADP + phosphate + an unfolded polypeptide.. Its function is as follows. Together with its co-chaperonin GroES, plays an essential role in assisting protein folding. The GroEL-GroES system forms a nano-cage that allows encapsulation of the non-native substrate proteins and provides a physical environment optimized to promote and accelerate protein folding. This Thermosynechococcus vestitus (strain NIES-2133 / IAM M-273 / BP-1) protein is Chaperonin GroEL 2.